A 499-amino-acid chain; its full sequence is Cytochrome P450 monooxygenase notH' (499 aa).

Residues 11 to 31 form a helical membrane-spanning segment; that stretch reads LGLEPAGWALALLTSSIIYLF. Residues Asn296 and Asn427 are each glycosylated (N-linked (GlcNAc...) asparagine). Residue Cys440 participates in heme binding.

It belongs to the cytochrome P450 family. Heme is required as a cofactor.

The protein localises to the membrane. Its pathway is alkaloid biosynthesis. Functionally, cytochrome P450 monooxygenase; part of the gene cluster that mediates the biosynthesis of notoamide, a fungal indole alkaloid that belongs to a family of natural products containing a characteristic bicyclo[2.2.2]diazaoctane core. The first step of notoamide biosynthesis involves coupling of L-proline and L-tryptophan by the bimodular NRPS notE', to produce cyclo-L-tryptophan-L-proline called brevianamide F. The reverse prenyltransferase notF' then acts as a deoxybrevianamide E synthase and converts brevianamide F to deoxybrevianamide E via reverse prenylation at C-2 of the indole ring leading to the bicyclo[2.2.2]diazaoctane core. Deoxybrevianamide E is further hydroxylated at C-6 of the indole ring, likely catalyzed by the cytochrome P450 monooxygenase notG', to yield 6-hydroxy-deoxybrevianamide E. 6-hydroxy-deoxybrevianamide E is a specific substrate of the prenyltransferase notC' for normal prenylation at C-7 to produce 6-hydroxy-7-prenyl-deoxybrevianamide, also called notoamide S. As the proposed pivotal branching point in notoamide biosynthesis, notoamide S can be diverted to notoamide E through an oxidative pyran ring closure putatively catalyzed by either notH' cytochrome P450 monooxygenase or the notD' FAD-linked oxidoreductase. This step would be followed by an indole 2,3-epoxidation-initiated pinacol-like rearrangement catalyzed by the notB' FAD-dependent monooxygenase leading to the formation of notoamide C and notoamide D. On the other hand notoamide S is converted to notoamide T by notH' (or notD'), a bifunctional oxidase that also functions as the intramolecular Diels-Alderase responsible for generation of (-)-notoamide T. To generate antipodal (+)-notoaminide T, notH (or notD) in Aspergillus strain MF297-2 is expected to catalyze a Diels-Alder reaction leading to the opposite stereochemistry. The remaining oxidoreductase notD' (or notH') likely catalyzes the oxidative pyran ring formation to yield (-)-stephacidin A. The FAD-dependent monooxygenase notI' is highly similar to notB' and is predicted to catalyze a similar conversion from (-)-stephacidin A to (+)-notoamide B via the 2,3-epoxidation of (-)-stephacidin A followed by a pinacol-type rearrangement. Finally, it remains unclear which enzyme could be responsible for the final hydroxylation steps leading to notoamide A and sclerotiamide. The polypeptide is Cytochrome P450 monooxygenase notH' (Aspergillus versicolor).